We begin with the raw amino-acid sequence, 822 residues long: Outer dense fiber protein 2 (822 aa).

A disordered region spans residues 26–45; it reads KGQKTTPAKCQQKHKQKMKG. Coiled coils occupy residues 113 to 418, 452 to 490, and 516 to 796; these read CKMN…EECA, DKSD…ALMD, and MEEK…NYVQ.

This sequence belongs to the ODF2 family. In terms of assembly, self-associates. Associates with microtubules and forms a fibrillar structure partially linked to the microtubule network.

The protein resides in the cytoplasm. Its subcellular location is the cytoskeleton. It localises to the microtubule organizing center. It is found in the centrosome. The protein localises to the cell projection. The protein resides in the cilium. Its subcellular location is the centriole. It localises to the spindle pole. It is found in the flagellum. Its function is as follows. Seems to be a major component of sperm tail outer dense fibers (ODF). ODFs are filamentous structures located on the outside of the axoneme in the midpiece and principal piece of the mammalian sperm tail and may help to maintain the passive elastic structures and elastic recoil of the sperm tail. This chain is Outer dense fiber protein 2 (ODF2), found in Gallus gallus (Chicken).